Reading from the N-terminus, the 163-residue chain is Lipoprotein signal peptidase (163 aa).

The next 3 helical transmembrane spans lie at 8-28 (FFLL…YWVM), 61-81 (FSHW…LWLW), and 93-113 (FGFT…ICFY). Residues aspartate 117 and aspartate 136 contribute to the active site. The helical transmembrane segment at 128-148 (YFAVFNLADTFITLGVIAIII) threads the bilayer.

Belongs to the peptidase A8 family.

Its subcellular location is the cell inner membrane. It catalyses the reaction Release of signal peptides from bacterial membrane prolipoproteins. Hydrolyzes -Xaa-Yaa-Zaa-|-(S,diacylglyceryl)Cys-, in which Xaa is hydrophobic (preferably Leu), and Yaa (Ala or Ser) and Zaa (Gly or Ala) have small, neutral side chains.. It functions in the pathway protein modification; lipoprotein biosynthesis (signal peptide cleavage). Its function is as follows. This protein specifically catalyzes the removal of signal peptides from prolipoproteins. The chain is Lipoprotein signal peptidase from Bartonella henselae (strain ATCC 49882 / DSM 28221 / CCUG 30454 / Houston 1) (Rochalimaea henselae).